Reading from the N-terminus, the 701-residue chain is Phytyl ester synthase 2, chloroplastic (701 aa).

A chloroplast-targeting transit peptide spans 1-65; sequence MAVTVLPSVS…KNNDENRATV (65 aa). The interval 37 to 64 is disordered; that stretch reads SVTSTSSPPTPSSGVQRRRKNNDENRAT.

Belongs to the diacylglycerol acyltransferase family.

It is found in the plastid. The protein localises to the chloroplast. The protein resides in the plastoglobule. It catalyses the reaction a 1,2-diacyl-3-O-(beta-D-galactosyl)-sn-glycerol + a 1,2-diacylglycerol = an acyl-3-O-(beta-D-galactosyl)-sn-glycerol + a triacylglycerol. It carries out the reaction a 1,2-diacylglycerol + a fatty acyl-CoA = a triacylglycerol + CoA. The catalysed reaction is a fatty acyl-[ACP] + a 1,2-diacylglycerol = a triacylglycerol + holo-[ACP]. The enzyme catalyses phytol + a fatty acyl-CoA = a fatty acid phytyl ester + CoA. It catalyses the reaction phytol + tetradecanoyl-CoA = tetradecanoate phytyl ester + CoA. It carries out the reaction a 1,3-diacylglycerol + a fatty acyl-CoA = a triacylglycerol + CoA. The catalysed reaction is 1,2-dihexanoylglycerol + tetradecanoyl-CoA = 1,2-dihexanoyl-3-tetradecanoylglycerol + CoA. The enzyme catalyses 1,2-dihexanoylglycerol + hexadecanoyl-CoA = 1,2-dihexanoyl-3-hexadecanoylglycerol + CoA. It catalyses the reaction 1,2-dihexanoylglycerol + octadecanoyl-CoA = 1,2-dihexanoyl-3-octadecanoylglycerol + CoA. It carries out the reaction (7Z,10Z,13Z)-hexadecatrienoyl-CoA + 1,2-dihexanoylglycerol = 1,2-dihexanoyl-3-(7Z,10Z,13Z-hexadecatrienoyl)-glycerol + CoA. The catalysed reaction is 1,2-dihexanoylglycerol + (9Z)-octadecenoyl-CoA = 1,2-dihexanoyl-3-(9Z-octadecenoyl)-glycerol + CoA. The enzyme catalyses 1,2-dihexanoylglycerol + (9Z,12Z,15Z)-octadecatrienoyl-CoA = 1,2-dihexanoyl-3-(9Z,12Z,15Z-octadecatrienoyl)-glycerol + CoA. It catalyses the reaction phytol + decanoyl-CoA = decanoate phytyl ester + CoA. It carries out the reaction (7Z,10Z,13Z)-hexadecatrienoyl-CoA + phytol = (7Z,10Z,13Z)-hexadecatrienoate phytyl ester + CoA. The catalysed reaction is phytol + dodecanoyl-CoA = dodecanoate phytyl ester + CoA. Its function is as follows. Acyltransferase involved in fatty acid phytyl ester synthesis in chloroplasts, a process required for the maintenance of the photosynthetic membrane integrity during abiotic stress and senescence. Exhibits phytyl ester synthesis and diacylglycerol acyltransferase activities with broad substrate specificities, and can employ acyl-CoAs, acyl carrier proteins, and galactolipids as acyl donors. In Arabidopsis thaliana (Mouse-ear cress), this protein is Phytyl ester synthase 2, chloroplastic.